A 581-amino-acid chain; its full sequence is MSATDLVSELGARFGDAVLGEQTTRERFPTVWIRPEASAAVHRYLKHEVERPFRMLVDLWAIDETARKHREGQPPSGITIASHLMSHERNADIRLKVGLDAEYPSAKSIAGVYPNAAWYEREAYDMFGVEFEAQPHSLRILLPPGWEGHPMRKTQPGRATERPLFNMTAALFDAKEHALAADPEKFGLPTHRDGVELMILNYGPHSMATHGVFRIVLALDGEEIVAARPDIGFHHRGAEKMAERQTWHNFLPYTDRVDYLGGVMGEMPYLQAVEKACGITVPDRALTVRVMLSEMFRIMNHLLFYGTMAQDTGAMSPVFYMFVDRERGYRVIEAITGARMHPGYFRIGGLSMDLPQGWDRLVREFLDWMPARLADYEGMVLRNEIFQARTKGVAAYDTAMALDWGVTGPGLRATGSAWDVRKARPYSGFENFEFEIPVGHNGDCYDRTVVRVEEIRQSLKIIRQCVDNMPSGPIKADHPLTTPPPRERMLHDIETMIHHFVGASWGPVLPPGETTGQVETVRGLTQFALISDGEPSSYRTRIRTPSFPHLQMISAVAPGMMVADLVAYLGSIDYVMSDVDR.

An NADH dehydrogenase I subunit C region spans residues 1–172; the sequence is MSATDLVSEL…PLFNMTAALF (172 aa). Positions 196 to 581 are NADH dehydrogenase I subunit D; that stretch reads ELMILNYGPH…IDYVMSDVDR (386 aa).

It in the N-terminal section; belongs to the complex I 30 kDa subunit family. This sequence in the C-terminal section; belongs to the complex I 49 kDa subunit family. NDH-1 is composed of 13 different subunits. Subunits NuoB, CD, E, F, and G constitute the peripheral sector of the complex.

It is found in the cell inner membrane. It carries out the reaction a quinone + NADH + 5 H(+)(in) = a quinol + NAD(+) + 4 H(+)(out). Its function is as follows. NDH-1 shuttles electrons from NADH, via FMN and iron-sulfur (Fe-S) centers, to quinones in the respiratory chain. The immediate electron acceptor for the enzyme in this species is believed to be ubiquinone. Couples the redox reaction to proton translocation (for every two electrons transferred, four hydrogen ions are translocated across the cytoplasmic membrane), and thus conserves the redox energy in a proton gradient. This is NADH-quinone oxidoreductase subunit C/D from Rhodopseudomonas palustris (strain HaA2).